The following is a 106-amino-acid chain: Small ribosomal subunit protein uS10 (106 aa).

This sequence belongs to the universal ribosomal protein uS10 family. Part of the 30S ribosomal subunit.

Involved in the binding of tRNA to the ribosomes. In Solibacter usitatus (strain Ellin6076), this protein is Small ribosomal subunit protein uS10.